We begin with the raw amino-acid sequence, 644 residues long: Exoribonuclease 2 (644 aa).

Residues 189–516 enclose the RNB domain; that stretch reads REDLTALNFV…NHRLLKAIIT (328 aa). Residues 561 to 643 form the S1 motif domain; the sequence is DTRFTAEIID…ETRNVIARPV (83 aa).

This sequence belongs to the RNR ribonuclease family. RNase II subfamily.

The protein resides in the cytoplasm. It carries out the reaction Exonucleolytic cleavage in the 3'- to 5'-direction to yield nucleoside 5'-phosphates.. Functionally, involved in mRNA degradation. Hydrolyzes single-stranded polyribonucleotides processively in the 3' to 5' direction. This is Exoribonuclease 2 from Yersinia pseudotuberculosis serotype O:3 (strain YPIII).